The following is a 165-amino-acid chain: Phosphopantetheine adenylyltransferase (165 aa).

A substrate-binding site is contributed by Thr9. Residues 9-10 (TF) and His17 contribute to the ATP site. Residues Lys41, Leu73, and Arg87 each coordinate substrate. Residues 88 to 90 (GLR), Glu98, and 123 to 129 (YQFISGT) each bind ATP.

This sequence belongs to the bacterial CoaD family. In terms of assembly, homohexamer. The cofactor is Mg(2+).

The protein resides in the cytoplasm. The catalysed reaction is (R)-4'-phosphopantetheine + ATP + H(+) = 3'-dephospho-CoA + diphosphate. The protein operates within cofactor biosynthesis; coenzyme A biosynthesis; CoA from (R)-pantothenate: step 4/5. Reversibly transfers an adenylyl group from ATP to 4'-phosphopantetheine, yielding dephospho-CoA (dPCoA) and pyrophosphate. The protein is Phosphopantetheine adenylyltransferase of Polynucleobacter necessarius subsp. necessarius (strain STIR1).